Consider the following 273-residue polypeptide: Coiled-coil domain-containing protein 3 (273 aa).

Positions 1–21 (MPLPLLLAALCLAASPAPARA) are cleaved as a signal peptide. Asn100 carries N-linked (GlcNAc...) asparagine glycosylation. Residues 188-250 (SVQKALFEEE…VNQKLNEKLG (63 aa)) are a coiled coil.

As to quaternary structure, homodimer. Post-translationally, N-glycosylated. In terms of tissue distribution, expressed in aorta and adipose tissue. Enriched in mature adipocytes. Over-expressed in adipose tissue from either hormonally-induced or nutritionally-regulated obese mice models.

It localises to the secreted. Negatively regulates TNF-alpha-induced pro-inflammatory response in endothelial cells (ECs) via inhibition of TNF-alpha-induced NF-kappaB activation in ECs. Positively regulates lipid accumulation in adipose cells. This is Coiled-coil domain-containing protein 3 (Ccdc3) from Mus musculus (Mouse).